The following is a 371-amino-acid chain: Protein-tyrosine sulfotransferase 2 (371 aa).

At 1-8 (MRVTMRRV) the chain is on the cytoplasmic side. The chain crosses the membrane as a helical; Signal-anchor for type II membrane protein span at residues 9-25 (LLAVGSVVALMVTLHLG). At 26–371 (QQVLECQHVL…QVTQNTSSSH (346 aa)) the chain is on the lumenal side. Position 76–80 (76–80 (RSGTT)) interacts with 3'-phosphoadenylyl sulfate. The cysteines at positions 94 and 154 are disulfide-linked. Residue glutamate 97 is the Proton donor/acceptor of the active site. The segment at 99 to 103 (RIIPR) is interaction with peptide substrate. 3'-phosphoadenylyl sulfate-binding residues include arginine 181, serine 189, and arginine 193. A disulfide bridge connects residues cysteine 223 and cysteine 231. 3'-phosphoadenylyl sulfate-binding positions include tyrosine 236, 283–292 (STDQVIKPVN), and lysine 298. N-linked (GlcNAc...) asparagine glycosylation is found at asparagine 341 and asparagine 366.

The protein belongs to the protein sulfotransferase family.

It is found in the golgi apparatus membrane. It carries out the reaction L-tyrosyl-[protein] + 3'-phosphoadenylyl sulfate = O-sulfo-L-tyrosine-[protein] + adenosine 3',5'-bisphosphate + H(+). Functionally, catalyzes the O-sulfation of tyrosine residues within acidic motifs of polypeptides, using 3'-phosphoadenylyl sulfate (PAPS) as cosubstrate. The sequence is that of Protein-tyrosine sulfotransferase 2 (TPST2) from Gallus gallus (Chicken).